The following is a 274-amino-acid chain: tRNA pseudouridine synthase A (274 aa).

Aspartate 60 (nucleophile) is an active-site residue. Tyrosine 118 contributes to the substrate binding site.

This sequence belongs to the tRNA pseudouridine synthase TruA family. As to quaternary structure, homodimer.

The catalysed reaction is uridine(38/39/40) in tRNA = pseudouridine(38/39/40) in tRNA. In terms of biological role, formation of pseudouridine at positions 38, 39 and 40 in the anticodon stem and loop of transfer RNAs. The protein is tRNA pseudouridine synthase A of Picosynechococcus sp. (strain ATCC 27264 / PCC 7002 / PR-6) (Agmenellum quadruplicatum).